Consider the following 182-residue polypeptide: Ribulose bisphosphate carboxylase small subunit, chloroplastic (182 aa).

The N-terminal 58 residues, 1-58 (MACSMISSATVAAVSRASPAQSSMVAPFTCLKSTSAFPVTQKTNNDITSIASNGGRVQ), are a transit peptide targeting the chloroplast.

This sequence belongs to the RuBisCO small chain family. As to quaternary structure, heterohexadecamer of 8 large and 8 small subunits.

Its subcellular location is the plastid. It localises to the chloroplast. RuBisCO catalyzes two reactions: the carboxylation of D-ribulose 1,5-bisphosphate, the primary event in carbon dioxide fixation, as well as the oxidative fragmentation of the pentose substrate. Both reactions occur simultaneously and in competition at the same active site. Although the small subunit is not catalytic it is essential for maximal activity. This chain is Ribulose bisphosphate carboxylase small subunit, chloroplastic, found in Betula pendula (European white birch).